The sequence spans 843 residues: Protein P (843 aa).

Positions 1–177 are terminal protein domain (TP); the sequence is MPLSYQHFRR…FCGSPYSWEQ (177 aa). Positions 178 to 346 are spacer; sequence ELQHGSTSLN…YCLSHIINLL (169 aa). The disordered stretch occupies residues 249-301; it reads TPTRWPSGVEPSGTGHSDNLATRSTSRFHQSEVRKETNPSLSTSKGHTSTGHA. 2 stretches are compositionally biased toward polar residues: residues 262–276 and 286–299; these read TGHSDNLATRSTSRF and NPSLSTSKGHTSTG. The segment at 347 to 690 is polymerase/reverse transcriptase domain (RT); that stretch reads EDWGPCYEHG…YMNLYPVARQ (344 aa). The region spanning 357–600 is the Reverse transcriptase domain; the sequence is EHHIRTPRTP…YSLHFMGYII (244 aa). Asp-429, Asp-551, and Asp-552 together coordinate Mg(2+).

This sequence belongs to the hepadnaviridae P protein family.

It catalyses the reaction DNA(n) + a 2'-deoxyribonucleoside 5'-triphosphate = DNA(n+1) + diphosphate. The catalysed reaction is Endonucleolytic cleavage to 5'-phosphomonoester.. Its activity is regulated as follows. Activated by host HSP70 and HSP40 in vitro to be able to bind the epsilon loop of the pgRNA. Because deletion of the RNase H region renders the protein partly chaperone-independent, the chaperones may be needed indirectly to relieve occlusion of the RNA-binding site by this domain. Inhibited by several reverse-transcriptase inhibitors: Lamivudine, Adefovir and Entecavir. In terms of biological role, multifunctional enzyme that converts the viral RNA genome into dsDNA in viral cytoplasmic capsids. This enzyme displays a DNA polymerase activity that can copy either DNA or RNA templates, and a ribonuclease H (RNase H) activity that cleaves the RNA strand of RNA-DNA heteroduplexes in a partially processive 3'- to 5'-endonucleasic mode. Neo-synthesized pregenomic RNA (pgRNA) are encapsidated together with the P protein, and reverse-transcribed inside the nucleocapsid. Initiation of reverse-transcription occurs first by binding the epsilon loop on the pgRNA genome, and is initiated by protein priming, thereby the 5'-end of (-)DNA is covalently linked to P protein. Partial (+)DNA is synthesized from the (-)DNA template and generates the relaxed circular DNA (RC-DNA) genome. After budding and infection, the RC-DNA migrates in the nucleus, and is converted into a plasmid-like covalently closed circular DNA (cccDNA). The activity of P protein does not seem to be necessary for cccDNA generation, and is presumably released from (+)DNA by host nuclear DNA repair machinery. This Homo sapiens (Human) protein is Protein P.